The sequence spans 177 residues: Putative rubredoxin (177 aa).

The region spanning 1–38 (MKICRICGYQIPEGEFNLLEDGWVCPRCGVGKEELQDS) is the Rubredoxin-like domain. Residues cysteine 4, cysteine 7, cysteine 25, and cysteine 28 each coordinate Fe cation.

This sequence belongs to the rubredoxin family. Fe(3+) serves as cofactor.

The sequence is that of Putative rubredoxin (rdxA) from Methanothermobacter thermautotrophicus (strain ATCC 29096 / DSM 1053 / JCM 10044 / NBRC 100330 / Delta H) (Methanobacterium thermoautotrophicum).